We begin with the raw amino-acid sequence, 362 residues long: MYSSVVHLARANPFNAPHLQLVHDGLAGPRSDPAGPPGPPRRSRNLAAAAVEEQYSCDYGSGRFFILCGLGGIISCGTTHTALVPLDLVKCRMQVDPQKYKSIFNGFSVTLKEDGFRGLAKGWAPTFIGYSLQGLCKFGFYEVFKVLYSNMLGEENAYLWRTSLYLAASASAEFFADIALAPMEAAKVRIQTQPGYANTLRDAAPKMYKEEGLKAFYKGVAPLWMRQIPYTMMKFACFERTVEALYKFVVPKPRSECSKPEQLVVTFVAGYIAGVFCAIVSHPADSVVSVLNKEKGSSASEVLKRLGFRGVWKGLFARIIMIGTLTALQWFIYDSVKVYFRLPRPPPPEMPESLKKKLGYTQ.

The transit peptide at 1–49 (MYSSVVHLARANPFNAPHLQLVHDGLAGPRSDPAGPPGPPRRSRNLAAA) directs the protein to the mitochondrion. Topologically, residues 50 to 63 (AVEEQYSCDYGSGR) are mitochondrial intermembrane. Solcar repeat units lie at residues 63–147 (RFFI…FKVL), 160–244 (WRTS…TVEA), and 261–339 (EQLV…VKVY). A helical membrane pass occupies residues 64–86 (FFILCGLGGIISCGTTHTALVPL). The Mitochondrial matrix segment spans residues 87–121 (DLVKCRMQVDPQKYKSIFNGFSVTLKEDGFRGLAK). K99 carries the N6-acetyllysine modification. K112 carries the N6-methyllysine modification. A helical transmembrane segment spans residues 122 to 141 (GWAPTFIGYSLQGLCKFGFY). The Mitochondrial intermembrane portion of the chain corresponds to 142–161 (EVFKVLYSNMLGEENAYLWR). Residues 162–183 (TSLYLAASASAEFFADIALAPM) form a helical membrane-spanning segment. Over 184 to 218 (EAAKVRIQTQPGYANTLRDAAPKMYKEEGLKAFYK) the chain is Mitochondrial matrix. Y196 is subject to Phosphotyrosine. K209 is modified (N6-acetyllysine). A helical membrane pass occupies residues 219 to 238 (GVAPLWMRQIPYTMMKFACF). The Mitochondrial intermembrane segment spans residues 239 to 261 (ERTVEALYKFVVPKPRSECSKPE). Residues 262-284 (QLVVTFVAGYIAGVFCAIVSHPA) traverse the membrane as a helical segment. The Mitochondrial matrix segment spans residues 285-314 (DSVVSVLNKEKGSSASEVLKRLGFRGVWKG). A helical transmembrane segment spans residues 315 to 333 (LFARIIMIGTLTALQWFIY). Over 334-362 (DSVKVYFRLPRPPPPEMPESLKKKLGYTQ) the chain is Mitochondrial intermembrane.

The protein belongs to the mitochondrial carrier (TC 2.A.29) family. As to quaternary structure, interacts with PPIF; the interaction is impaired by CsA. As to expression, expressed in heart, diaphragm and skeletal muscle (at protein level). Not detected in liver, lung, brain, and kidney (at protein level). In terms of tissue distribution, ubiquitous (at protein level).

Its subcellular location is the mitochondrion inner membrane. The catalysed reaction is phosphate(in) + H(+)(in) = phosphate(out) + H(+)(out). Its activity is regulated as follows. Up-regulated in the presence of cardiolipin. Inorganic ion transporter that transports phosphate or copper ions across the mitochondrial inner membrane into the matrix compartment. Mediates proton-coupled symport of phosphate ions necessary for mitochondrial oxidative phosphorylation of ADP to ATP. Transports copper ions probably in the form of anionic copper(I) complexes to maintain mitochondrial matrix copper pool and to supply copper for cytochrome C oxidase complex assembly. May also play a role in regulation of the mitochondrial permeability transition pore (mPTP). The chain is Solute carrier family 25 member 3 from Bos taurus (Bovine).